Here is a 540-residue protein sequence, read N- to C-terminus: Intestinal-type alkaline phosphatase 1 (540 aa).

Positions 1–20 are cleaved as a signal peptide; that stretch reads MQGDWVLLLLLGLRIHLSFG. Aspartate 62 contributes to the Mg(2+) binding site. Zn(2+) is bound by residues aspartate 62 and serine 112. Serine 112 acts as the Phosphoserine intermediate in catalysis. A disulfide bridge connects residues cysteine 141 and cysteine 203. Asparagine 142 carries an N-linked (GlcNAc...) asparagine glycan. Residue serine 175 coordinates Mg(2+). Positions 236, 289, and 290 each coordinate Ca(2+). Asparagine 301 is a glycosylation site (N-linked (GlcNAc...) asparagine). Position 305 (aspartate 305) interacts with Ca(2+). Position 331 (glutamate 331) interacts with Mg(2+). Residues aspartate 336, histidine 340, aspartate 377, and histidine 378 each coordinate Zn(2+). A glycan (N-linked (GlcNAc...) asparagine) is linked at asparagine 428. Residue histidine 452 coordinates Zn(2+). Cysteine 487 and cysteine 494 form a disulfide bridge. The GPI-anchor amidated asparagine moiety is linked to residue asparagine 511. The propeptide at 512–540 is removed in mature form; it reads SAITMNNVLLSLQLLVSMLLLVGTALVVS.

This sequence belongs to the alkaline phosphatase family. Homodimer. Mg(2+) is required as a cofactor. Requires Zn(2+) as cofactor. Ca(2+) serves as cofactor.

The protein localises to the cell membrane. The enzyme catalyses a phosphate monoester + H2O = an alcohol + phosphate. Functionally, alkaline phosphatase that can hydrolyze various phosphate compounds. This Rattus norvegicus (Rat) protein is Intestinal-type alkaline phosphatase 1 (Alpi).